We begin with the raw amino-acid sequence, 538 residues long: Phosphoenolpyruvate carboxykinase (ATP) (538 aa).

Substrate contacts are provided by R64, Y205, and K211. ATP is bound by residues K211, H230, and 246-254; that span reads GLSGTGKTT. Mn(2+) contacts are provided by K211 and H230. D267 contacts Mn(2+). ATP contacts are provided by residues E295, R331, 447-448, and T453; that span reads RI. Residue R331 coordinates substrate.

It belongs to the phosphoenolpyruvate carboxykinase (ATP) family. In terms of assembly, monomer. The cofactor is Mn(2+).

The protein localises to the cytoplasm. The enzyme catalyses oxaloacetate + ATP = phosphoenolpyruvate + ADP + CO2. The protein operates within carbohydrate biosynthesis; gluconeogenesis. Involved in the gluconeogenesis. Catalyzes the conversion of oxaloacetate (OAA) to phosphoenolpyruvate (PEP) through direct phosphoryl transfer between the nucleoside triphosphate and OAA. This Baumannia cicadellinicola subsp. Homalodisca coagulata protein is Phosphoenolpyruvate carboxykinase (ATP).